We begin with the raw amino-acid sequence, 407 residues long: Negative RAS protein regulator protein (407 aa).

Disordered regions lie at residues 51 to 94 (PRII…ARQI), 165 to 187 (HPSKKSKQKKKKSKQEAGSNLNF), and 241 to 273 (NNNNNNINNSNNSNNNNSNNINRNSNHSTNVFS). Residues 55–73 (SSSNSNSNSNSNSNSNSNS) show a composition bias toward low complexity. In terms of domain architecture, Myb-like spans 90–158 (SARQIRKKWK…QCHDRFKVLY (69 aa)). Residues 165-177 (HPSKKSKQKKKKS) show a composition bias toward basic residues. A compositionally biased stretch (low complexity) spans 241-270 (NNNNNNINNSNNSNNNNSNNINRNSNHSTN).

It localises to the nucleus. Its function is as follows. Negative regulator of the Ras-cyclic AMP pathway. Negatively regulate the activity of normal but not mutationally activated Ras proteins. The down-regulatory effect of RPI1 requires the presence of one of the two Ras GTPase activators, IRA1 and IRA2. This Saccharomyces cerevisiae (strain ATCC 204508 / S288c) (Baker's yeast) protein is Negative RAS protein regulator protein (RPI1).